A 541-amino-acid polypeptide reads, in one-letter code: Protein wntless homolog B (541 aa).

At 1 to 15 (MAGAIIENMSTKKLC) the chain is on the cytoplasmic side. A helical transmembrane segment spans residues 16–36 (MVGVALLLLQVLAFLVGGLIA). At 37-232 (PKPTTYVNPV…SIFQNGGFTM (196 aa)) the chain is on the lumenal side. Residues 233-253 (VWFAMKTFLTPCIIIIMIWYW) traverse the membrane as a helical segment. The Cytoplasmic segment spans residues 254 to 268 (RRITMMTRSPVLLEK). Residues 269-289 (VIFALGISMTFINIPVEWFSI) form a helical membrane-spanning segment. Residues 290–303 (GYDWTWMLLFGDIR) are Lumenal-facing. A helical transmembrane segment spans residues 304–324 (QGIFYAMLLSFWIIFCGEHMM). The Cytoplasmic segment spans residues 325–331 (DQAERNR). The helical transmembrane segment at 332 to 352 (ISIYWKQVGPIAFGSCCLFIF) threads the bilayer. The Lumenal segment spans residues 353–379 (DMCERGVQLKNPFYSIWTTDVGAEIAM). Residues 380–400 (AFIIVAGICACLYFLFLCFMV) form a helical membrane-spanning segment. At 401 to 431 (YQVFRNISGKRSNLPAMSKARRLHYEGLIFR) the chain is on the cytoplasmic side. Residues 432-452 (FKFLMIITLACAALTVVFFIT) form a helical membrane-spanning segment. Topologically, residues 453–471 (TQITEGNWKLGDLSIELNS) are lumenal. Residues 472 to 492 (AFFTGIYGMWNLYVFALMFLY) form a helical membrane-spanning segment. At 493-541 (APSHKHYGDGQSNDGAGMSSGEELQLTTTITHIDGPTELYRLAGKEAQE) the chain is on the cytoplasmic side.

This sequence belongs to the wntless family. As to expression, enriched in the animal hemisphere of the early cleavage embryo, where expression persists until the late gastrula stage. At the neurula stage, strongly expressed at the border of the neural plate and dorsal midline. After the neurula stage, expressed in various organs, including the eye, liver, heart, pronephros, otic vesicle, and dorsal neural tube. Expression in the developing eye is dynamic; expressed in the eye field from stages 23 to 27, and from stage 30 expression is confined to distinct regions including the central part and border of the eye.

The protein localises to the golgi apparatus membrane. It is found in the cytoplasmic vesicle membrane. Its function is as follows. Required for a subset of Wnt-dependent developmental processes, in particular, eye and pronephros development. Regulates the secretion of wnt4, which is required for eye development. The polypeptide is Protein wntless homolog B (wls-b) (Xenopus laevis (African clawed frog)).